Consider the following 296-residue polypeptide: MTKTALLKLFVAIVITFILILPEYFKTPKERTLELSCLEVCLQSNFTYSLSSLNFSFVTFLQPVRETQIIMRIFLNPSNFRNFTRTCQDITGEFKMCSSCLVCESKGNMDFISQEQTSKVLIRRGSMEVKANDFHSPCQHFNFSVAPLVDHLEEYNTTCHLKNHTGRSTIMEDEPSKEKSINYTCRIMEYPNDCIHISLHLEMDIKNITCSMKITWYILVLLVFIFLIILTIRKILEGQRRVQKWQSHRDKPTSVLLRGSDSEKLRALNVQVLSAETTQRLPLDQVQEVLPPIPEL.

Residues 1-4 (MTKT) lie on the Cytoplasmic side of the membrane. The helical transmembrane segment at 5–25 (ALLKLFVAIVITFILILPEYF) threads the bilayer. Residues 26-211 (KTPKERTLEL…EMDIKNITCS (186 aa)) lie on the Extracellular side of the membrane. N45 and N156 each carry an N-linked (GlcNAc...) asparagine glycan. A helical transmembrane segment spans residues 212–232 (MKITWYILVLLVFIFLIILTI). Over 233-296 (RKILEGQRRV…QEVLPPIPEL (64 aa)) the chain is Cytoplasmic.

Its subcellular location is the membrane. The polypeptide is Transmembrane protein 156 (TMEM156) (Homo sapiens (Human)).